The sequence spans 243 residues: Probable transcriptional regulatory protein BP2308 (243 aa).

The segment at 1–21 (MAGHSKWANIQHRKGRQDAKR) is disordered.

Belongs to the TACO1 family.

The protein localises to the cytoplasm. This chain is Probable transcriptional regulatory protein BP2308, found in Bordetella pertussis (strain Tohama I / ATCC BAA-589 / NCTC 13251).